The primary structure comprises 422 residues: Leucine-rich repeat protein 1 (422 aa).

LRR repeat units follow at residues 184–207 (LKNLTKLDLSHNCIKKLPATIGDL), 209–230 (HLQELNLNDNQLETFSVPLCTS), 233–258 (QKSLHSLDLSKNKIKALPVQFCQFRE), 260–279 (TNLNLNDNELIHLPFKIGQL), 280–301 (TNLRFLSAARNKLRNLPSEFKM), and 304–327 (LEYLDLFGNTFEKPEVIPIIKLQV).

As to quaternary structure, component of the probable ECS(LRR1) E3 ubiquitin-protein ligase complex which contains CUL2, RBX1, Elongin BC complex and LRR1. Interacts with CUL2, RBX1, ELOB and ELOC.

The protein resides in the nucleus. It participates in protein modification; protein ubiquitination. Substrate recognition subunit of an ECS (Elongin BC-CUL2/5-SOCS-box protein) E3 ubiquitin-protein ligase complex which mediates the ubiquitination and subsequent proteasomal degradation of target proteins. ECS(LRR1) ubiquitinates MCM7 and promotes CMG replisome disassembly by VCP and chromatin extraction during S-phase. May negatively regulate the 4-1BB-mediated signaling cascades which result in the activation of NK-kappaB and JNK1. This chain is Leucine-rich repeat protein 1, found in Mus musculus (Mouse).